The primary structure comprises 250 residues: Probable transcriptional regulatory protein Mmc1_0479 (250 aa).

Belongs to the TACO1 family.

The protein localises to the cytoplasm. This chain is Probable transcriptional regulatory protein Mmc1_0479, found in Magnetococcus marinus (strain ATCC BAA-1437 / JCM 17883 / MC-1).